The sequence spans 426 residues: Molybdopterin molybdenumtransferase 1 (426 aa).

The protein belongs to the MoeA family. Mg(2+) serves as cofactor.

The catalysed reaction is adenylyl-molybdopterin + molybdate = Mo-molybdopterin + AMP + H(+). It participates in cofactor biosynthesis; molybdopterin biosynthesis. Catalyzes the insertion of molybdate into adenylated molybdopterin with the concomitant release of AMP. The chain is Molybdopterin molybdenumtransferase 1 (moeA1) from Mycobacterium tuberculosis (strain ATCC 25618 / H37Rv).